Reading from the N-terminus, the 96-residue chain is MGLAFSGARPCCCRHNVITTDGGEVVSLTAHEFDVVDIESEEEGNFYVPPDVRVVTRAPGPQYRRPSDPPSRHTRRRDPDVARPPATLTPPLSDSE.

G2 carries N-myristoyl glycine; by host lipidation. Residues 37–43 (DIESEEE) form an asp/Glu-rich (acidic) region. S40 is subject to Phosphoserine. Positions 50 to 96 (PDVRVVTRAPGPQYRRPSDPPSRHTRRRDPDVARPPATLTPPLSDSE) are disordered. Residues 65 to 81 (RPSDPPSRHTRRRDPDV) show a composition bias toward basic and acidic residues.

The protein belongs to the herpesviridae cytoplasmic envelopment protein 3 family. In terms of assembly, interacts with cytoplasmic envelopment protein 2; this interaction is essential for the proper localization of each protein to the assembly complex and thus for the production of infectious virus. Interacts with gE (via C-terminus). Interacts with gD (via C-terminus). Interacts with UL56. In terms of processing, myristoylation and palmitoylation (probably on one or more of the nearby cysteines at the N-terminus) enable membrane-binding and Golgi apparatus-specific targeting and are essential for efficient packaging. Phosphorylated. Phosphorylation does not seem to be required for recycling to the host Golgi apparatus. Packaging is selective for underphosphorylated forms.

The protein resides in the virion tegument. Its subcellular location is the virion membrane. It localises to the host cell membrane. It is found in the host Golgi apparatus membrane. Functionally, plays an important role in the cytoplasmic envelopment of tegument proteins and capsids during the assembly and egress processes. Also participates in viral entry at the fusion step probably by regulating the core fusion machinery. The sequence is that of Cytoplasmic envelopment protein 3 from Homo sapiens (Human).